The chain runs to 378 residues: Succinyl-diaminopimelate desuccinylase (378 aa).

Residue histidine 68 participates in Zn(2+) binding. Aspartate 70 is an active-site residue. Zn(2+) is bound at residue aspartate 101. Glutamate 135 serves as the catalytic Proton acceptor. Positions 136, 164, and 350 each coordinate Zn(2+).

It belongs to the peptidase M20A family. DapE subfamily. In terms of assembly, homodimer. Zn(2+) serves as cofactor. The cofactor is Co(2+).

The enzyme catalyses N-succinyl-(2S,6S)-2,6-diaminopimelate + H2O = (2S,6S)-2,6-diaminopimelate + succinate. The protein operates within amino-acid biosynthesis; L-lysine biosynthesis via DAP pathway; LL-2,6-diaminopimelate from (S)-tetrahydrodipicolinate (succinylase route): step 3/3. Catalyzes the hydrolysis of N-succinyl-L,L-diaminopimelic acid (SDAP), forming succinate and LL-2,6-diaminopimelate (DAP), an intermediate involved in the bacterial biosynthesis of lysine and meso-diaminopimelic acid, an essential component of bacterial cell walls. This chain is Succinyl-diaminopimelate desuccinylase, found in Vibrio campbellii (strain ATCC BAA-1116).